Reading from the N-terminus, the 368-residue chain is Homoserine O-acetyltransferase (368 aa).

One can recognise an AB hydrolase-1 domain in the interval 43 to 346 (ILLEHALTGT…EYGHDAFLVE (304 aa)). Residue Ser-145 is the Nucleophile of the active site. Arg-212 is a substrate binding site. Active-site residues include Asp-307 and His-340. Substrate is bound at residue Asp-341.

Belongs to the AB hydrolase superfamily. MetX family. In terms of assembly, homodimer.

The protein resides in the cytoplasm. It carries out the reaction L-homoserine + acetyl-CoA = O-acetyl-L-homoserine + CoA. Its pathway is amino-acid biosynthesis; L-methionine biosynthesis via de novo pathway; O-acetyl-L-homoserine from L-homoserine: step 1/1. Its function is as follows. Transfers an acetyl group from acetyl-CoA to L-homoserine, forming acetyl-L-homoserine. In Listeria innocua serovar 6a (strain ATCC BAA-680 / CLIP 11262), this protein is Homoserine O-acetyltransferase.